Reading from the N-terminus, the 150-residue chain is Molybdopterin synthase catalytic subunit (150 aa).

Residues 37 to 39, 103 to 104, lysine 119, and 126 to 128 each bind substrate; these read KVR, HR, and KRE. A Glycyl lysine isopeptide (Lys-Gly) (interchain with G-Cter in MoaD) cross-link involves residue lysine 119.

The protein belongs to the MoaE family. As to quaternary structure, heterotetramer of 2 MoaD subunits and 2 MoaE subunits. Also stable as homodimer. The enzyme changes between these two forms during catalysis.

It carries out the reaction 2 [molybdopterin-synthase sulfur-carrier protein]-C-terminal-Gly-aminoethanethioate + cyclic pyranopterin phosphate + H2O = molybdopterin + 2 [molybdopterin-synthase sulfur-carrier protein]-C-terminal Gly-Gly + 2 H(+). The protein operates within cofactor biosynthesis; molybdopterin biosynthesis. Converts molybdopterin precursor Z to molybdopterin. This requires the incorporation of two sulfur atoms into precursor Z to generate a dithiolene group. The sulfur is provided by MoaD. This Escherichia coli (strain K12) protein is Molybdopterin synthase catalytic subunit (moaE).